Here is a 329-residue protein sequence, read N- to C-terminus: Probable aryl-alcohol dehydrogenase AAD4 (329 aa).

Y30 acts as the Proton donor in catalysis. H105 is a substrate binding site. 190-200 (DVMGGGRFQSK) lines the NADP(+) pocket.

The protein belongs to the aldo/keto reductase family. Aldo/keto reductase 2 subfamily.

This chain is Probable aryl-alcohol dehydrogenase AAD4 (AAD4), found in Saccharomyces cerevisiae (strain ATCC 204508 / S288c) (Baker's yeast).